Here is a 181-residue protein sequence, read N- to C-terminus: Mytilin-1 (181 aa).

Positions 1-22 (MISKYCLFVIVLGTTGTALVLT) are cleaved as a signal peptide.

In terms of tissue distribution, component of the organic matrix of calcified shell layers like nacre and prisms.

The protein resides in the secreted. This is Mytilin-1 from Mytilus galloprovincialis (Mediterranean mussel).